A 245-amino-acid polypeptide reads, in one-letter code: Ribonuclease 3 (245 aa).

The region spanning 18 to 146 (LSKFLENLSI…FVGAIYLDSG (129 aa)) is the RNase III domain. Residue Glu-59 participates in Mg(2+) binding. Residue Asp-63 is part of the active site. Asp-132 and Glu-135 together coordinate Mg(2+). Glu-135 is an active-site residue. The DRBM domain maps to 173–242 (DYKSLLQEYV…AEVALKAMEN (70 aa)).

It belongs to the ribonuclease III family. In terms of assembly, homodimer. Mg(2+) serves as cofactor.

It is found in the cytoplasm. It carries out the reaction Endonucleolytic cleavage to 5'-phosphomonoester.. Digests double-stranded RNA. Involved in the processing of primary rRNA transcript to yield the immediate precursors to the large and small rRNAs (23S and 16S). Processes some mRNAs, and tRNAs when they are encoded in the rRNA operon. Processes pre-crRNA and tracrRNA of type II CRISPR loci if present in the organism. The protein is Ribonuclease 3 of Borreliella burgdorferi (strain ATCC 35210 / DSM 4680 / CIP 102532 / B31) (Borrelia burgdorferi).